The following is a 292-amino-acid chain: Ribosomal protein L11 methyltransferase (292 aa).

T136, G159, D181, and N228 together coordinate S-adenosyl-L-methionine.

It belongs to the methyltransferase superfamily. PrmA family.

Its subcellular location is the cytoplasm. The enzyme catalyses L-lysyl-[protein] + 3 S-adenosyl-L-methionine = N(6),N(6),N(6)-trimethyl-L-lysyl-[protein] + 3 S-adenosyl-L-homocysteine + 3 H(+). Its function is as follows. Methylates ribosomal protein L11. The protein is Ribosomal protein L11 methyltransferase of Rhizobium etli (strain CIAT 652).